Here is a 249-residue protein sequence, read N- to C-terminus: Secretion system apparatus lipoprotein SsaJ (249 aa).

A signal peptide spans 1–18 (MKVHRIVFLTVLTFFLTA). Cys-19 is lipidated: N-palmitoyl cysteine. Residue Cys-19 is the site of S-diacylglycerol cysteine attachment. The helical transmembrane segment at 225 to 245 (LMLSLTGLLLGVGILIGYFCL) threads the bilayer.

The protein belongs to the YscJ lipoprotein family.

It is found in the cell outer membrane. In terms of biological role, component of Salmonella pathogenicity island 2 (SPI-2) type III secretion system, required for secretion of some type III-secreted effectors including the SpvB exotoxin. This is Secretion system apparatus lipoprotein SsaJ (ssaJ) from Salmonella typhimurium (strain 14028s / SGSC 2262).